The following is a 434-amino-acid chain: UDP-N-acetylglucosamine 1-carboxyvinyltransferase 1 (434 aa).

22 to 23 (KN) contributes to the phosphoenolpyruvate binding site. Arg-93 contacts UDP-N-acetyl-alpha-D-glucosamine. Cys-117 acts as the Proton donor in catalysis. Position 117 is a 2-(S-cysteinyl)pyruvic acid O-phosphothioketal (Cys-117). Residues 122-126 (RPIDQ), Asp-306, and Val-328 each bind UDP-N-acetyl-alpha-D-glucosamine.

It belongs to the EPSP synthase family. MurA subfamily.

It is found in the cytoplasm. It carries out the reaction phosphoenolpyruvate + UDP-N-acetyl-alpha-D-glucosamine = UDP-N-acetyl-3-O-(1-carboxyvinyl)-alpha-D-glucosamine + phosphate. Its pathway is cell wall biogenesis; peptidoglycan biosynthesis. Cell wall formation. Adds enolpyruvyl to UDP-N-acetylglucosamine. The polypeptide is UDP-N-acetylglucosamine 1-carboxyvinyltransferase 1 (Bacillus cereus (strain ATCC 10987 / NRS 248)).